A 409-amino-acid chain; its full sequence is Probable type I inositol 1,4,5-trisphosphate 5-phosphatase (409 aa).

The protein belongs to the inositol 1,4,5-trisphosphate 5-phosphatase type I family.

The enzyme catalyses 1D-myo-inositol 1,4,5-trisphosphate + H2O = 1D-myo-inositol 1,4-bisphosphate + phosphate. The catalysed reaction is 1D-myo-inositol 1,3,4,5-tetrakisphosphate + H2O = 1D-myo-inositol 1,3,4-trisphosphate + phosphate. The polypeptide is Probable type I inositol 1,4,5-trisphosphate 5-phosphatase (ipp-5) (Caenorhabditis elegans).